The sequence spans 323 residues: GTP 3',8-cyclase (323 aa).

In terms of domain architecture, Radical SAM core spans 4-233; that stretch reads KYGREIDYLR…NGPAKYISIE (230 aa). Arginine 13 contributes to the GTP binding site. Residues cysteine 20 and cysteine 24 each contribute to the [4Fe-4S] cluster site. Tyrosine 26 lines the S-adenosyl-L-methionine pocket. Cysteine 27 contributes to the [4Fe-4S] cluster binding site. Arginine 63 contacts GTP. Position 67 (glycine 67) interacts with S-adenosyl-L-methionine. Threonine 94 provides a ligand contact to GTP. S-adenosyl-L-methionine is bound at residue serine 118. Residue lysine 154 coordinates GTP. Position 188 (methionine 188) interacts with S-adenosyl-L-methionine. [4Fe-4S] cluster is bound by residues cysteine 250 and cysteine 253. 255 to 257 serves as a coordination point for GTP; sequence RIR. Cysteine 267 is a binding site for [4Fe-4S] cluster.

This sequence belongs to the radical SAM superfamily. MoaA family. As to quaternary structure, monomer and homodimer. The cofactor is [4Fe-4S] cluster.

It carries out the reaction GTP + AH2 + S-adenosyl-L-methionine = (8S)-3',8-cyclo-7,8-dihydroguanosine 5'-triphosphate + 5'-deoxyadenosine + L-methionine + A + H(+). Its pathway is cofactor biosynthesis; molybdopterin biosynthesis. Its function is as follows. Catalyzes the cyclization of GTP to (8S)-3',8-cyclo-7,8-dihydroguanosine 5'-triphosphate. The protein is GTP 3',8-cyclase of Clostridium perfringens (strain 13 / Type A).